We begin with the raw amino-acid sequence, 369 residues long: uncharacterized protein (369 aa).

The segment at 1-35 (MQTNNPSYFFRSESALQDEKRKEEKSHNPNGNPRN) is disordered. Over residues 17–27 (QDEKRKEEKSH) the composition is skewed to basic and acidic residues. WD repeat units follow at residues 83–127 (GHSG…CVET), 130–169 (GHTD…SRLL), 174–213 (GHSR…GSQL), 220–260 (GHQS…HEET), 263–301 (EHPD…VKDI), and 304–341 (GHYE…DNNE).

This is an uncharacterized protein from Schizosaccharomyces pombe (strain 972 / ATCC 24843) (Fission yeast).